Reading from the N-terminus, the 262-residue chain is MRRTLYRLMIELTNGRFTSYTLRKFAQSRLSSIIIPSYAKVFQINQDEMEKGLKEYRTLHELFTRKLKEGKRSIDTDASSIVSPVDGVFADHGPIEDTKTFDIKGKRYSIVDMLGNEERAQRYAGGTYMVIYLSPSHYHRIHSPLSGSVTERFVLGRKSYPVNAAGMEYGKEPLSKNYRSVTEVNSDGEHMALVKVGAMFVNSIELLHERDTVQKGEEMAYFTFGSTVVLLFEKDMIEVVQELKSGQELRLGEKIATRLAHK.

Residues Asp86, His142, and Ser226 each act as charge relay system; for autoendoproteolytic cleavage activity in the active site. The active-site Schiff-base intermediate with substrate; via pyruvic acid; for decarboxylase activity is the Ser226. Ser226 bears the Pyruvic acid (Ser); by autocatalysis mark.

It belongs to the phosphatidylserine decarboxylase family. PSD-B subfamily. Prokaryotic type I sub-subfamily. As to quaternary structure, heterodimer of a large membrane-associated beta subunit and a small pyruvoyl-containing alpha subunit. Requires pyruvate as cofactor. Is synthesized initially as an inactive proenzyme. Formation of the active enzyme involves a self-maturation process in which the active site pyruvoyl group is generated from an internal serine residue via an autocatalytic post-translational modification. Two non-identical subunits are generated from the proenzyme in this reaction, and the pyruvate is formed at the N-terminus of the alpha chain, which is derived from the carboxyl end of the proenzyme. The autoendoproteolytic cleavage occurs by a canonical serine protease mechanism, in which the side chain hydroxyl group of the serine supplies its oxygen atom to form the C-terminus of the beta chain, while the remainder of the serine residue undergoes an oxidative deamination to produce ammonia and the pyruvoyl prosthetic group on the alpha chain. During this reaction, the Ser that is part of the protease active site of the proenzyme becomes the pyruvoyl prosthetic group, which constitutes an essential element of the active site of the mature decarboxylase.

Its subcellular location is the cell membrane. The catalysed reaction is a 1,2-diacyl-sn-glycero-3-phospho-L-serine + H(+) = a 1,2-diacyl-sn-glycero-3-phosphoethanolamine + CO2. The protein operates within phospholipid metabolism; phosphatidylethanolamine biosynthesis; phosphatidylethanolamine from CDP-diacylglycerol: step 2/2. Functionally, catalyzes the formation of phosphatidylethanolamine (PtdEtn) from phosphatidylserine (PtdSer). The chain is Phosphatidylserine decarboxylase proenzyme from Bacillus anthracis.